Consider the following 354-residue polypeptide: Uroporphyrinogen decarboxylase (354 aa).

Substrate-binding positions include 27 to 31 (RQAGR), Asp77, Tyr154, Ser209, and His327.

This sequence belongs to the uroporphyrinogen decarboxylase family. Homodimer.

Its subcellular location is the cytoplasm. It catalyses the reaction uroporphyrinogen III + 4 H(+) = coproporphyrinogen III + 4 CO2. It participates in porphyrin-containing compound metabolism; protoporphyrin-IX biosynthesis; coproporphyrinogen-III from 5-aminolevulinate: step 4/4. Its function is as follows. Catalyzes the decarboxylation of four acetate groups of uroporphyrinogen-III to yield coproporphyrinogen-III. The sequence is that of Uroporphyrinogen decarboxylase from Shewanella frigidimarina (strain NCIMB 400).